Here is a 584-residue protein sequence, read N- to C-terminus: Actin-binding protein IPP (584 aa).

One can recognise a BTB domain in the interval 37–104; it reads CDVQLQVGKE…IYTGVVNIAV (68 aa). Kelch repeat units lie at residues 296–343, 344–390, 391–437, 439–485, 487–533, and 535–583; these read YTRL…VVGG, MVYA…VCYG, AIYA…EMQG, IYAV…ALND, IYAI…TVNG, and LYVS…GVAV.

In terms of tissue distribution, expression seems confined to tissues derived from trophectoderm and primitive endoderm.

Its subcellular location is the cytoplasm. The protein resides in the cytoskeleton. Its function is as follows. May play a role in organizing the actin cytoskeleton. The protein is Actin-binding protein IPP (Ipp) of Mus musculus (Mouse).